Here is a 68-residue protein sequence, read N- to C-terminus: Cytochrome c3 (68 aa).

Heme-binding residues include His-17, His-20, Cys-26, Cys-29, His-30, His-45, Cys-49, Cys-52, His-53, Cys-62, Cys-65, and His-66.

Post-translationally, binds 3 heme groups per subunit.

Its function is as follows. Participates in sulfate respiration coupled with phosphorylation by transferring electrons from the enzyme dehydrogenase to ferredoxin. In Desulfuromonas acetoxidans (Chloropseudomonas ethylica), this protein is Cytochrome c3 (cyd).